We begin with the raw amino-acid sequence, 131 residues long: Lysozyme C (131 aa).

One can recognise a C-type lysozyme domain in the interval 2-131 (KIYEQCELAR…VSQWIKGCKL (130 aa)). Intrachain disulfides connect cysteine 7–cysteine 129, cysteine 31–cysteine 117, cysteine 66–cysteine 82, and cysteine 78–cysteine 96. Active-site residues include glutamate 36 and aspartate 54.

This sequence belongs to the glycosyl hydrolase 22 family. As to quaternary structure, monomer.

Its subcellular location is the secreted. The catalysed reaction is Hydrolysis of (1-&gt;4)-beta-linkages between N-acetylmuramic acid and N-acetyl-D-glucosamine residues in a peptidoglycan and between N-acetyl-D-glucosamine residues in chitodextrins.. Lysozymes have primarily a bacteriolytic function; those in tissues and body fluids are associated with the monocyte-macrophage system and enhance the activity of immunoagents. Has strong bacteriolytic activity against M.luteus and V.cholerae, weak bacteriolytic activity against P.aeruginosa and no activity against A.hydrophila. This chain is Lysozyme C (LYZ), found in Pelodiscus sinensis (Chinese softshell turtle).